The sequence spans 512 residues: NADH-quinone oxidoreductase subunit N (512 aa).

14 helical membrane passes run 32-52 (VLPA…SVLF), 57-77 (FIIV…AVFY), 97-117 (VLSF…AAIV), 126-146 (IEFP…TLMT), 151-171 (FILV…LIGM), 186-206 (FLLG…LFGG), 231-251 (IGLV…PYHA), 264-284 (VTGY…LILY), 296-316 (WAWL…LLAL), 324-344 (MLAY…SAGI), 348-368 (VLFY…ILAY), 392-412 (AIAI…GGFW), 431-451 (ILLI…LRIG), and 473-493 (VGVT…WFLL).

Belongs to the complex I subunit 2 family. In terms of assembly, NDH-1 is composed of 14 different subunits. Subunits NuoA, H, J, K, L, M, N constitute the membrane sector of the complex.

The protein localises to the cell inner membrane. The enzyme catalyses a quinone + NADH + 5 H(+)(in) = a quinol + NAD(+) + 4 H(+)(out). Its function is as follows. NDH-1 shuttles electrons from NADH, via FMN and iron-sulfur (Fe-S) centers, to quinones in the respiratory chain. The immediate electron acceptor for the enzyme in this species is believed to be ubiquinone. Couples the redox reaction to proton translocation (for every two electrons transferred, four hydrogen ions are translocated across the cytoplasmic membrane), and thus conserves the redox energy in a proton gradient. This chain is NADH-quinone oxidoreductase subunit N, found in Leptospira interrogans serogroup Icterohaemorrhagiae serovar Lai (strain 56601).